A 307-amino-acid polypeptide reads, in one-letter code: Trehalose transport system permease protein SugA (307 aa).

The next 6 membrane-spanning stretches (helical) occupy residues 25–45 (LAFM…AYPI), 89–109 (LAIT…LALV), 123–143 (AVLI…YYAW), 168–188 (LGIV…LLLL), 217–237 (ILPM…LDAF), and 272–292 (LGSA…FIFI). The 207-residue stretch at 85 to 291 (LAVTLAITAV…GCVAVIAFIF (207 aa)) folds into the ABC transmembrane type-1 domain.

This sequence belongs to the binding-protein-dependent transport system permease family. As to quaternary structure, the complex is composed of two ATP-binding proteins (SugC), two transmembrane proteins (Suga and SugB) and a solute-binding protein (LpqY).

It is found in the cell inner membrane. In terms of biological role, part of the ABC transporter complex LpqY-SugA-SugB-SugC, which is highly specific for uptake of trehalose. Involved in the recycling of extracellular trehalose released from trehalose-containing molecules synthesized by M.tuberculosis. Trehalose uptake is essential for virulence. Probably responsible for the translocation of the substrate across the membrane. The sequence is that of Trehalose transport system permease protein SugA (sugA) from Mycobacterium tuberculosis (strain CDC 1551 / Oshkosh).